The chain runs to 297 residues: Glycerol-3-phosphate dehydrogenase [NAD(P)+] (297 aa).

3 residues coordinate NADPH: Trp-11, Arg-33, and Lys-79. The sn-glycerol 3-phosphate site is built by Lys-79, Gly-107, and Ser-109. Ala-111 is a binding site for NADPH. Positions 161, 214, 224, 225, and 226 each coordinate sn-glycerol 3-phosphate. Residue Lys-161 is the Proton acceptor of the active site. Residue Arg-225 participates in NADPH binding. Residues Val-249 and Glu-251 each contribute to the NADPH site.

The protein belongs to the NAD-dependent glycerol-3-phosphate dehydrogenase family.

The protein localises to the cytoplasm. The enzyme catalyses sn-glycerol 3-phosphate + NAD(+) = dihydroxyacetone phosphate + NADH + H(+). It carries out the reaction sn-glycerol 3-phosphate + NADP(+) = dihydroxyacetone phosphate + NADPH + H(+). The protein operates within membrane lipid metabolism; glycerophospholipid metabolism. Functionally, catalyzes the reduction of the glycolytic intermediate dihydroxyacetone phosphate (DHAP) to sn-glycerol 3-phosphate (G3P), the key precursor for phospholipid synthesis. The chain is Glycerol-3-phosphate dehydrogenase [NAD(P)+] from Campylobacter jejuni subsp. jejuni serotype O:2 (strain ATCC 700819 / NCTC 11168).